Reading from the N-terminus, the 450-residue chain is Coiled-coil domain-containing protein 149-A (450 aa).

Coiled-coil stretches lie at residues Met1–Lys197 and Ile259–Ser286. A disordered region spans residues Ser290 to Glu358. Positions Pro343 to Thr354 are enriched in polar residues.

This sequence belongs to the CCDC149 family.

The polypeptide is Coiled-coil domain-containing protein 149-A (ccdc149a) (Danio rerio (Zebrafish)).